Here is a 235-residue protein sequence, read N- to C-terminus: Probable transcriptional regulatory protein Cla_1081 (235 aa).

It belongs to the TACO1 family.

It localises to the cytoplasm. The polypeptide is Probable transcriptional regulatory protein Cla_1081 (Campylobacter lari (strain RM2100 / D67 / ATCC BAA-1060)).